We begin with the raw amino-acid sequence, 35 residues long: Trypsin inhibitor 1 (35 aa).

Cystine bridges form between C2–C19, C9–C23, and C18–C34.

Trypsin inhibitor. The chain is Trypsin inhibitor 1 from Spinacia oleracea (Spinach).